The sequence spans 506 residues: Nucleoside import ATP-binding protein NupA (506 aa).

ABC transporter domains follow at residues 7-242 (IQMI…VGRS) and 259-503 (LEIK…VGGN). Residue 39–46 (GENGAGKS) coordinates ATP.

This sequence belongs to the ABC transporter superfamily. As to quaternary structure, the complex is composed of two ATP-binding proteins (NupA), two transmembrane proteins (NupB and NupC) and a solute-binding protein (BmpA).

It localises to the cell membrane. Its function is as follows. Part of an ABC transporter complex involved in the uptake of all common nucleosides. Responsible for energy coupling to the transport system. The polypeptide is Nucleoside import ATP-binding protein NupA (Lactococcus lactis subsp. cremoris (strain MG1363)).